Here is a 426-residue protein sequence, read N- to C-terminus: Tryptophan synthase beta chain (426 aa).

Lys108 is modified (N6-(pyridoxal phosphate)lysine).

It belongs to the TrpB family. As to quaternary structure, tetramer of two alpha and two beta chains. Pyridoxal 5'-phosphate serves as cofactor.

It catalyses the reaction (1S,2R)-1-C-(indol-3-yl)glycerol 3-phosphate + L-serine = D-glyceraldehyde 3-phosphate + L-tryptophan + H2O. The protein operates within amino-acid biosynthesis; L-tryptophan biosynthesis; L-tryptophan from chorismate: step 5/5. The beta subunit is responsible for the synthesis of L-tryptophan from indole and L-serine. This chain is Tryptophan synthase beta chain (trpB), found in Thermoplasma volcanium (strain ATCC 51530 / DSM 4299 / JCM 9571 / NBRC 15438 / GSS1).